The following is a 160-amino-acid chain: Cyclic pyranopterin monophosphate synthase (160 aa).

Substrate-binding positions include 77–79 and 114–115; these read MCH and ME. Residue Asp-129 is part of the active site.

It belongs to the MoaC family. As to quaternary structure, homohexamer; trimer of dimers.

It carries out the reaction (8S)-3',8-cyclo-7,8-dihydroguanosine 5'-triphosphate = cyclic pyranopterin phosphate + diphosphate. It participates in cofactor biosynthesis; molybdopterin biosynthesis. Catalyzes the conversion of (8S)-3',8-cyclo-7,8-dihydroguanosine 5'-triphosphate to cyclic pyranopterin monophosphate (cPMP). The polypeptide is Cyclic pyranopterin monophosphate synthase (Listeria monocytogenes serotype 4b (strain F2365)).